Consider the following 309-residue polypeptide: Taste receptor type 2 member 113 (309 aa).

At 1-10 (MVAVLQSTLP) the chain is on the extracellular side. Residues 11–31 (IIFSMEFIMGTLGNGFIFLIV) traverse the membrane as a helical segment. At 32 to 55 (CIDWVQRRKISLVDQIRTALAISR) the chain is on the cytoplasmic side. The chain crosses the membrane as a helical span at residues 56-76 (IALIWLIFLDWWVSVHYPALH). At 77 to 80 (ETGK) the chain is on the extracellular side. Residues 81–101 (MLSTYLISWTVINHCNFWLTA) form a helical membrane-spanning segment. Residues 102–127 (NLSILYFLKIANFSNIIFLYLKFRSK) are Cytoplasmic-facing. The helical transmembrane segment at 128–148 (NVVLVTLLVSLFFLFLNTVII) threads the bilayer. Topologically, residues 149-185 (KIFSDVCFDSVQRNVSQIFIMYNHEQICKFLSFTNPM) are extracellular. Asn162 is a glycosylation site (N-linked (GlcNAc...) asparagine). The chain crosses the membrane as a helical span at residues 186-206 (FTFIPFVMSTVMFSLLIFSLW). The Cytoplasmic portion of the chain corresponds to 207-229 (RHLKNMQHTAKGCRDISTTVHIR). The chain crosses the membrane as a helical span at residues 230-250 (ALQTIIVSVVLYTIFFLSFFV). Residues 251–262 (KVWSFVSPERYL) are Extracellular-facing. The helical transmembrane segment at 263 to 283 (IFLFVWALGNAVFSAHPFVMI) threads the bilayer. Residues 284–309 (LVNRRLRLASLSLIFWLWYRFKNIEV) are Cytoplasmic-facing.

This sequence belongs to the G-protein coupled receptor T2R family.

Its subcellular location is the membrane. Its function is as follows. Putative taste receptor which may play a role in the perception of bitterness. This is Taste receptor type 2 member 113 from Mus musculus (Mouse).